The primary structure comprises 456 residues: Keratin, type I cytoskeletal 12 (456 aa).

The span at 1-19 (MSLSVRTSALSRRSSSQNG) shows a compositional bias: polar residues. The interval 1-25 (MSLSVRTSALSRRSSSQNGVAGRPW) is disordered. The interval 1-114 (MSLSVRTSAL…GNDGGLLSGS (114 aa)) is head. Residues 115–150 (EKETMQNLNDRLASYLGKVRALEEANAELENKIREW) form a coil 1A region. One can recognise an IF rod domain in the interval 115–402 (EKETMQNLND…RLLEGDTQGD (288 aa)). Residues 154–171 (RRTGDSGSQSDYSKYYPL) form a linker 1 region. A coil 1B region spans residues 172-263 (IEDLKNKIIS…KNHEEELQSF (92 aa)). The interval 264–286 (QAGGPGEVNVEMDAAPGVDLTKS) is linker 12. Positions 287–397 (GELRKEINSN…IETYRRLLEG (111 aa)) are coil 2. The segment at 398 to 456 (DTQGDGFDESLSLTVSKPQAPSVDSSKDPNKTRKIKTVVQEIVNGEVVSSQVQELEEAM) is tail. Residues 405-430 (DESLSLTVSKPQAPSVDSSKDPNKTR) form a disordered region. Over residues 408–421 (LSLTVSKPQAPSVD) the composition is skewed to polar residues.

Belongs to the intermediate filament family. As to quaternary structure, heterotetramer of two type I and two type II keratins. Keratin-3 associates with keratin-12.

Functionally, involved in corneal epithelium organization, integrity and corneal keratin expression. The protein is Keratin, type I cytoskeletal 12 of Rattus norvegicus (Rat).